Reading from the N-terminus, the 417-residue chain is MSLSNKLTLDKLDVKGKRVVMRVDFNVPMKNNQITNNQRIKAAVPSIKFCLDNGAKSVVLMSHLGRPDGVPMPDKYSLEPVAVELKSLLGKDVLFLKDCVGPEVEKACANPAAGSVILLENLRFHVEEEGKGKDASGNKVKAEPAKIEAFRASLSKLGDVYVNDAFGTAHRAHSSMVGVNLPQKAGGFLMKKELNYFAKALESPERPFLAILGGAKVADKIQLINNMLDKVNEMIIGGGMAFTFLKVLNNMEIGTSLFDEEGAKIVKDLMSKAEKNGVKITLPVDFVTADKFDENAKTGQATVASGIPAGWMGLDCGPESSKKYAEAVTRAKQIVWNGPVGVFEWEAFARGTKALMDEVVKATSRGCITIIGGGDTATCCAKWNTEDKVSHVSTGGGASLELLEGKVLPGVDALSNI.

N-acetylserine is present on serine 2. Phosphoserine is present on residues serine 2 and serine 4. Lysine 6 carries the post-translational modification N6-succinyllysine. An N6-acetyllysine modification is found at lysine 11. The (2R)-3-phosphoglycerate site is built by valine 23, aspartate 24, phenylalanine 25, asparagine 26, glutamine 38, and arginine 39. Positions 38-43 (QRIKAA) are mitochondrial targeting region exposed following cis-trans isomerization by PIN1 and recognized by the TOM complex for mitochondrial translocation of the protein. Position 48 is an N6-acetyllysine; alternate (lysine 48). Lysine 48 carries the N6-succinyllysine; alternate modification. (2R)-3-phosphoglycerate-binding residues include serine 62, histidine 63, glycine 65, and arginine 66. Lysine 75 is modified (N6-acetyllysine). The residue at position 76 (tyrosine 76) is a Phosphotyrosine. Lysine 86 and lysine 91 each carry N6-acetyllysine. Lysine 97 bears the N6-acetyllysine; alternate mark. The residue at position 97 (lysine 97) is an N6-(2-hydroxyisobutyryl)lysine; alternate. (2R)-3-phosphoglycerate contacts are provided by leucine 122 and arginine 123. Lysine 131 is modified (N6-acetyllysine; alternate). At lysine 131 the chain carries N6-malonyllysine; alternate. Lysine 146 carries the N6-acetyllysine modification. Residues histidine 170 and arginine 171 each contribute to the (2R)-3-phosphoglycerate site. Lysine 191 carries the N6-succinyllysine modification. Tyrosine 196 carries the phosphotyrosine modification. The residue at position 199 (lysine 199) is an N6-acetyllysine. At serine 203 the chain carries Phosphoserine; by MAPK1. Glycine 214 contributes to the ADP binding site. Glycine 214 contributes to the CDP binding site. Residues alanine 215 and lysine 216 each contribute to the AMP site. Residue alanine 215 coordinates ATP. Residue alanine 215 participates in Mg(2+) binding. Lysine 216 carries the N6-(2-hydroxyisobutyryl)lysine modification. Residues alanine 218 and aspartate 219 each coordinate Mg(2+). A CDP-binding site is contributed by aspartate 219. Residue lysine 220 coordinates AMP. Residue lysine 220 participates in ATP binding. Residue lysine 220 is modified to N6-(2-hydroxyisobutyryl)lysine. Glycine 238 contributes to the ADP binding site. Glycine 238 is a CDP binding site. Glycine 239 is an AMP binding site. An ATP-binding site is contributed by glycine 239. N6-acetyllysine is present on residues lysine 267 and lysine 291. Glycine 313 provides a ligand contact to AMP. Glycine 313 provides a ligand contact to ATP. Position 323 is an N6-(2-hydroxyisobutyryl)lysine (lysine 323). Glycine 338, valine 340, and phenylalanine 343 together coordinate CDP. Position 343 (phenylalanine 343) interacts with ADP. AMP is bound at residue glutamate 344. ATP is bound at residue glutamate 344. Lysine 361 is modified (N6-acetyllysine). Residues aspartate 375 and threonine 376 each contribute to the ATP site. Residue aspartate 375 participates in Mg(2+) binding.

It belongs to the phosphoglycerate kinase family. As to quaternary structure, monomer. Interacts with kinase MAPK1/ERK2; the interaction is direct, occurs under hypoxic conditions, and promotes its interaction with PIN1. Interacts with peptidyl-prolyl cis-trans isomerase PIN1; the interaction is direct, occurs under hypoxic conditions, and targets the protein to the mitochondrion by promoting interactions with the TOM complex. Interacts with mitochondrial circRNA mcPGK1 (via its 2nd stem-loop); the interaction is direct and targets the protein to the mitochondrion by promoting interactions with the TOM complex. Interacts with pyruvate dehydrogenase kinase PDK1; the interaction is direct, occurs under hypoxic conditions and leads to PDK1-mediated inhibition of pyruvate dehydrogenase complex activity. Requires Mg(2+) as cofactor. Phosphorylated at Ser-203 by MAPK1/ERK2 under hypoxic conditions, which promotes its mitochondrial targeting. Mainly expressed in spermatogonia. Localized on the principle piece in the sperm (at protein level). Expression significantly decreased in the testis of elderly men.

It is found in the cytoplasm. The protein localises to the cytosol. The protein resides in the mitochondrion matrix. It catalyses the reaction (2R)-3-phosphoglycerate + ATP = (2R)-3-phospho-glyceroyl phosphate + ADP. The enzyme catalyses L-seryl-[protein] + ATP = O-phospho-L-seryl-[protein] + ADP + H(+). The protein operates within carbohydrate degradation; glycolysis; pyruvate from D-glyceraldehyde 3-phosphate: step 2/5. Its activity is regulated as follows. Specifically inhibited by heterocyclic compound CBR-470-0. Functionally, catalyzes one of the two ATP producing reactions in the glycolytic pathway via the reversible conversion of 1,3-diphosphoglycerate to 3-phosphoglycerate. Both L- and D- forms of purine and pyrimidine nucleotides can be used as substrates, but the activity is much lower on pyrimidines. In addition to its role as a glycolytic enzyme, it seems that PGK1 acts as a polymerase alpha cofactor protein (primer recognition protein). Acts as a protein kinase when localized to the mitochondrion where it phosphorylates pyruvate dehydrogenase kinase PDK1 to inhibit pyruvate dehydrogenase complex activity and suppress the formation of acetyl-coenzyme A from pyruvate, and consequently inhibit oxidative phosphorylation and promote glycolysis. May play a role in sperm motility. In Homo sapiens (Human), this protein is Phosphoglycerate kinase 1 (PGK1).